Consider the following 722-residue polypeptide: NCK-interacting protein with SH3 domain (722 aa).

The region spanning 1-58 (MYRALYAFRSAEPNALAFAAGETFLVLERSSAHWWLAARARSGETGYVPPAYLRRLQG) is the SH3 domain. 2 disordered regions span residues 101-122 (KETLSRRGPSASSVAVMTSSTS) and 149-286 (PSSE…ASDD). A compositionally biased stretch (low complexity) spans 110–121 (SASSVAVMTSST). S120 carries the phosphoserine modification. The span at 169–185 (QIPPQPRRAAPTTPPPP) shows a compositional bias: pro residues. The Nuclear localization signal signature appears at 175–192 (RRAAPTTPPPPVKRRDRE). Phosphothreonine is present on T181. The segment covering 206–240 (PSGGNSVSSGSSVSSTSLDTLYTSSSPSEPGSSCS) has biased composition (low complexity). At S294 the chain carries Phosphoserine.

In terms of assembly, associates with the intermediate filaments, vimentin and desmin. Binds the first and third SH3 domains of NCK. Binds the proline-rich domains of N-WASP through its SH3 domain. Similarly, binds diaphanous protein homolog 1 (DRF1). Binds the SH3 domains of GRB2 through its proline-rich domains. Interacts with Helicobacter pylori toxin vacA. Isoform 4 interacts with FHOD1. Interacts with FASLG. Interacts with TMIGD2. Highest expression in heart, brain, skeletal muscle, kidney and liver. Lower levels in placenta, lung, small intestine and leukocytes. Weak expression in colon, thymus and spleen.

The protein localises to the nucleus. Has an important role in stress fiber formation induced by active diaphanous protein homolog 1 (DRF1). Induces microspike formation, in vivo. In vitro, stimulates N-WASP-induced ARP2/3 complex activation in the absence of CDC42. May play an important role in the maintenance of sarcomeres and/or in the assembly of myofibrils into sarcomeres. Implicated in regulation of actin polymerization and cell adhesion. Plays a role in angiogenesis. The sequence is that of NCK-interacting protein with SH3 domain (NCKIPSD) from Homo sapiens (Human).